A 221-amino-acid chain; its full sequence is MRSIVLLSGGLDSAVSLACSLQGGEVCLCLTFDYGQKAAEREKKAAAALAAHYKLRHRVIELPFLKEITSTALVSETSELPAAEEEELDENEASRSSAALVWVPNRNGVFINIAAAFAEAYRCDLVVTGFNREEAASFPDNSPEFVVAANASLSYSTLNKVRVASYTQGLNKTEIVKLGMNMGVPFDLIWSCYGGAEKMCRRCESCLRFIRAAKTAGLQLE.

7–17 (LSGGLDSAVSL) is a binding site for ATP. 4 residues coordinate Zn(2+): Cys192, Cys200, Cys203, and Cys206.

Belongs to the QueC family. As to quaternary structure, homodimer. The cofactor is Zn(2+).

The catalysed reaction is 7-carboxy-7-deazaguanine + NH4(+) + ATP = 7-cyano-7-deazaguanine + ADP + phosphate + H2O + H(+). It participates in purine metabolism; 7-cyano-7-deazaguanine biosynthesis. Its function is as follows. Catalyzes the ATP-dependent conversion of 7-carboxy-7-deazaguanine (CDG) to 7-cyano-7-deazaguanine (preQ(0)). This is 7-cyano-7-deazaguanine synthase from Pelotomaculum thermopropionicum (strain DSM 13744 / JCM 10971 / SI).